Reading from the N-terminus, the 568-residue chain is Sulfate adenylyltransferase (568 aa).

Positions 1 to 162 (MANSPHGGVL…IEAVNKLNHY (162 aa)) are N-terminal. The catalytic stretch occupies residues 163 to 388 (DYVALRYSPA…LRESSPPRAT (226 aa)). Gln-190 is a binding site for sulfate. ATP contacts are provided by residues 190-193 (QTRN) and 284-287 (GRDH). Residues Thr-191, Arg-192, and Asn-193 contribute to the active site. Position 192 (Arg-192) interacts with sulfate. Ala-288 provides a ligand contact to sulfate. Residue Val-326 coordinates ATP. Positions 389–568 (QGFTIFLTGY…LESEGYFDRL (180 aa)) are allosteric regulation domain; adenylyl-sulfate kinase-like. Residues 428 to 431 (DTVR), Arg-445, 471 to 472 (IA), and Arg-510 each bind 3'-phosphoadenylyl sulfate.

It in the N-terminal section; belongs to the sulfate adenylyltransferase family. This sequence in the C-terminal section; belongs to the APS kinase family. In terms of assembly, homohexamer. Dimer of trimers.

The protein localises to the cytoplasm. It carries out the reaction sulfate + ATP + H(+) = adenosine 5'-phosphosulfate + diphosphate. Its pathway is sulfur metabolism; hydrogen sulfide biosynthesis; sulfite from sulfate: step 1/3. With respect to regulation, allosterically inhibited by 3'-phosphoadenosine 5'-phosphosulfate (PAPS). Its function is as follows. Catalyzes the first intracellular reaction of sulfate assimilation, forming adenosine-5'-phosphosulfate (APS) from inorganic sulfate and ATP. Plays an important role in sulfate activation as a component of the biosynthesis pathway of sulfur-containing amino acids. In Aspergillus terreus, this protein is Sulfate adenylyltransferase.